We begin with the raw amino-acid sequence, 312 residues long: Acetyl-coenzyme A carboxylase carboxyl transferase subunit alpha (312 aa).

The region spanning 36 to 286 is the CoA carboxyltransferase C-terminal domain; that stretch reads RLDKEVKSIY…KEYFLDALRT (251 aa).

The protein belongs to the AccA family. In terms of assembly, acetyl-CoA carboxylase is a heterohexamer composed of biotin carboxyl carrier protein (AccB), biotin carboxylase (AccC) and two subunits each of ACCase subunit alpha (AccA) and ACCase subunit beta (AccD).

The protein resides in the cytoplasm. It catalyses the reaction N(6)-carboxybiotinyl-L-lysyl-[protein] + acetyl-CoA = N(6)-biotinyl-L-lysyl-[protein] + malonyl-CoA. Its pathway is lipid metabolism; malonyl-CoA biosynthesis; malonyl-CoA from acetyl-CoA: step 1/1. Its function is as follows. Component of the acetyl coenzyme A carboxylase (ACC) complex. First, biotin carboxylase catalyzes the carboxylation of biotin on its carrier protein (BCCP) and then the CO(2) group is transferred by the carboxyltransferase to acetyl-CoA to form malonyl-CoA. This Helicobacter pylori (strain G27) protein is Acetyl-coenzyme A carboxylase carboxyl transferase subunit alpha.